The chain runs to 317 residues: Probable GTP 3',8-cyclase (317 aa).

In terms of domain architecture, Radical SAM core spans 4–223 (RYGRPLEDLR…KSEIREKHFR (220 aa)). Residue Arg-13 coordinates GTP. [4Fe-4S] cluster is bound by residues Cys-20, Cys-24, and Cys-27. Lys-61 lines the GTP pocket. Residue Gly-65 coordinates S-adenosyl-L-methionine. Thr-91 contacts GTP. Residue Ser-115 coordinates S-adenosyl-L-methionine. Lys-152 is a GTP binding site. The [4Fe-4S] cluster site is built by Cys-246 and Cys-249. Residue 251-253 (RVR) participates in GTP binding. Cys-263 provides a ligand contact to [4Fe-4S] cluster.

It belongs to the radical SAM superfamily. MoaA family. Requires [4Fe-4S] cluster as cofactor.

It carries out the reaction GTP + AH2 + S-adenosyl-L-methionine = (8S)-3',8-cyclo-7,8-dihydroguanosine 5'-triphosphate + 5'-deoxyadenosine + L-methionine + A + H(+). The protein operates within cofactor biosynthesis; molybdopterin biosynthesis. Its function is as follows. Catalyzes the cyclization of GTP to (8S)-3',8-cyclo-7,8-dihydroguanosine 5'-triphosphate. This chain is Probable GTP 3',8-cyclase, found in Metallosphaera sedula (strain ATCC 51363 / DSM 5348 / JCM 9185 / NBRC 15509 / TH2).